Here is a 342-residue protein sequence, read N- to C-terminus: NADH-quinone oxidoreductase subunit H 1 (342 aa).

8 consecutive transmembrane segments (helical) span residues 7-27 (FLLEKTIIVTAVFTISLVIAM), 78-98 (ALFILGPSIAMMTACLTGAVI), 120-140 (IGVLYIFAVVSIGVYGVMIGG), 166-186 (MGLSIIALVMTTGTLSIGEIV), 193-213 (WWNIVYQPLGFFIFMVCSFAE), 245-265 (LFAEYINMFISSAVMSAFYFG), 284-304 (ILGTLFFFTKIVLFIFLFMWV), and 322-342 (KIMIPMAIINIIITGACILLF).

It belongs to the complex I subunit 1 family. As to quaternary structure, NDH-1 is composed of 14 different subunits. Subunits NuoA, H, J, K, L, M, N constitute the membrane sector of the complex.

The protein resides in the cell inner membrane. It catalyses the reaction a quinone + NADH + 5 H(+)(in) = a quinol + NAD(+) + 4 H(+)(out). In terms of biological role, NDH-1 shuttles electrons from NADH, via FMN and iron-sulfur (Fe-S) centers, to quinones in the respiratory chain. The immediate electron acceptor for the enzyme in this species is believed to be ubiquinone. Couples the redox reaction to proton translocation (for every two electrons transferred, four hydrogen ions are translocated across the cytoplasmic membrane), and thus conserves the redox energy in a proton gradient. This subunit may bind ubiquinone. This is NADH-quinone oxidoreductase subunit H 1 from Cytophaga hutchinsonii (strain ATCC 33406 / DSM 1761 / CIP 103989 / NBRC 15051 / NCIMB 9469 / D465).